The chain runs to 555 residues: Probable metabolite transport protein YDR387C (555 aa).

The Cytoplasmic segment spans residues 1 to 39 (MSTDESEDVYSDLYSIISQVTSNTANDIEQLPYALTFKT). Residues 40 to 60 (SLIFVGATIGGLLFGYDTGVI) form a helical membrane-spanning segment. Topologically, residues 61–83 (SGVLLSLKPEDLSLVVLTDVQKE) are extracellular. The helical transmembrane segment at 84–104 (LITSSTSVGSFFGSILAFPLA) threads the bilayer. The Cytoplasmic portion of the chain corresponds to 105–118 (DRYGRRITLAICCS). A helical membrane pass occupies residues 119–139 (IFILAAIGMAIARTLTFLICG). Residue R140 is a topological domain, extracellular. The chain crosses the membrane as a helical span at residues 141-161 (LLVGIAVGVSAQCVPLFLSEI). At 162 to 168 (SPSRIRG) the chain is on the cytoplasmic side. Residues 169–189 (FMLTLNIIAITGGQLVSYVIA) traverse the membrane as a helical segment. The Extracellular portion of the chain corresponds to 190–200 (SLMKEIDNSWR). Residues 201–221 (YLFALSAIPAILFLSILDFIP) traverse the membrane as a helical segment. The Cytoplasmic segment spans residues 222-356 (ESPRWSISKG…TIRALIVGCM (135 aa)). Positions 289-313 (SSTSGTLSPPNIKRLSSNTERTSNT) are disordered. Residues 357–377 (LMFFQQITGFNAFMYYAAIIF) form a helical membrane-spanning segment. Residues 378-384 (SKFNIKN) are Extracellular-facing. Residues 385-405 (PLLPPILIASTNFIFTFFAMY) form a helical membrane-spanning segment. Over 406–413 (TMDSLGRR) the chain is Cytoplasmic. A helical transmembrane segment spans residues 414-434 (AILLRTILIMTVGLLLCSVGF). The Extracellular portion of the chain corresponds to 435–440 (GHDQVN). Residues 441 to 461 (LLLISVVIYVAAYASAMGSVP) traverse the membrane as a helical segment. The Cytoplasmic portion of the chain corresponds to 462 to 474 (WTCVEFLPLNRRS). Residues 475–497 (FGASCIACTNWLTNAFVSMTYLS) traverse the membrane as a helical segment. The Extracellular portion of the chain corresponds to 498–506 (TINTIGDEN). Residues 507–527 (TMLIFAFFTVCAWFFVYFWYP) traverse the membrane as a helical segment. At 528–555 (EVKGLSLEEVGRVFDNGIDVHYVFRTYH) the chain is on the cytoplasmic side.

It belongs to the major facilitator superfamily. Sugar transporter (TC 2.A.1.1) family.

Its subcellular location is the membrane. The chain is Probable metabolite transport protein YDR387C from Saccharomyces cerevisiae (strain ATCC 204508 / S288c) (Baker's yeast).